Consider the following 280-residue polypeptide: Mediator of RNA polymerase II transcription subunit 2 (280 aa).

The disordered stretch occupies residues 212–247; sequence GLQNTSGGNEKKNDPQINFNDTNAPPSAVNVPENGN. The span at 226 to 236 shows a compositional bias: polar residues; sequence PQINFNDTNAP.

This sequence belongs to the Mediator complex subunit 2 family. In terms of assembly, component of the Mediator complex.

It localises to the nucleus. Functionally, component of the Mediator complex, a coactivator involved in the regulated transcription of nearly all RNA polymerase II-dependent genes. Mediator functions as a bridge to convey information from gene-specific regulatory proteins to the basal RNA polymerase II transcription machinery. Mediator is recruited to promoters by direct interactions with regulatory proteins and serves as a scaffold for the assembly of a functional preinitiation complex with RNA polymerase II and the general transcription factors. The protein is Mediator of RNA polymerase II transcription subunit 2 (MED2) of Kluyveromyces lactis (strain ATCC 8585 / CBS 2359 / DSM 70799 / NBRC 1267 / NRRL Y-1140 / WM37) (Yeast).